The chain runs to 175 residues: Calcineurin subunit B (175 aa).

4 EF-hand domains span residues 21–56 (AEIE…SANP), 58–88 (AKRI…FSGR), 90–125 (ETDA…MVGT), and 131–166 (QLQQ…TEVI). The Ca(2+) site is built by D34, D36, S38, S40, E45, D66, D68, S70, D72, E77, D103, D105, D107, Y109, E114, D144, D146, D148, K150, and E155.

This sequence belongs to the calcineurin regulatory subunit family. As to quaternary structure, composed of a catalytic subunit (A) and a regulatory subunit (B).

Its function is as follows. Regulatory subunit of calcineurin, a calcium-dependent, calmodulin stimulated protein phosphatase. Confers calcium sensitivity. The polypeptide is Calcineurin subunit B (CNB1) (Kluyveromyces lactis (strain ATCC 8585 / CBS 2359 / DSM 70799 / NBRC 1267 / NRRL Y-1140 / WM37) (Yeast)).